An 896-amino-acid chain; its full sequence is C-type lectin domain-containing protein 180 (896 aa).

Residues 1-18 form the signal peptide; the sequence is MRHLIFTGFVLTLTALEA. Residues 54-178 enclose the C-type lectin domain; that stretch reads PWGDLYQFRA…CESTSPDHHA (125 aa). Residue Asn133 is glycosylated (N-linked (GlcNAc...) asparagine). Cys154 and Cys169 are joined by a disulfide. Asn221 and Asn235 each carry an N-linked (GlcNAc...) asparagine glycan. Disordered stretches follow at residues 243–264, 354–436, 492–519, and 557–809; these read STVK…SVSK, VKQE…LAPE, EKLE…EEQK, and KVKA…TTKP. Over residues 250-260 the composition is skewed to acidic residues; sequence SEEETSSEEEE. 2 stretches are compositionally biased toward basic and acidic residues: residues 354 to 382 and 395 to 406; these read VKQE…KISE and DMPKADIEPPKE. Positions 407–426 are enriched in acidic residues; that stretch reads EDCDEEGSGSGSGEEDEKDE. Basic and acidic residues predominate over residues 427-436; the sequence is SSEKIELAPE. 3 stretches are compositionally biased toward basic and acidic residues: residues 575-590, 607-663, and 683-692; these read KSAK…KVGN, QNRE…ETKL, and EEPKSDKDSE. A compositionally biased stretch (low complexity) spans 727–739; that stretch reads STTTESTTVAVKE. Residues 740–768 are compositionally biased toward basic and acidic residues; that stretch reads VPVDEIEKIAKLEAKQHTEDEKVTVETKQ. Over residues 773 to 809 the composition is skewed to low complexity; that stretch reads TPAPTTSEKTSTTAAPSTKPAEETTTTTEAPSTTTKP.

The protein resides in the secreted. This chain is C-type lectin domain-containing protein 180 (clec-180), found in Caenorhabditis elegans.